A 344-amino-acid chain; its full sequence is L-rhamnose-proton symporter (344 aa).

The next 10 membrane-spanning stretches (helical) occupy residues 4–24 (AITM…CFYA), 38–58 (WSVG…ALLL), 68–88 (FSLS…IGNI), 101–121 (MGIG…TPII), 137–157 (TLLG…AGQL), 175–195 (LVLA…MNAA), 214–234 (LPSY…FCFI), 259–279 (VLLS…YAWG), 290–310 (ISWM…GLVL), and 323–343 (VLSL…MGMA).

Belongs to the L-rhamnose transporter (TC 2.A.7.6) family.

The protein resides in the cell inner membrane. It carries out the reaction L-rhamnopyranose(in) + H(+)(in) = L-rhamnopyranose(out) + H(+)(out). Functionally, uptake of L-rhamnose across the cytoplasmic membrane with the concomitant transport of protons into the cell (symport system). In Escherichia coli O157:H7, this protein is L-rhamnose-proton symporter.